Here is a 583-residue protein sequence, read N- to C-terminus: Lamin-B3 (583 aa).

The disordered stretch occupies residues 1–30 (MATSTPSRAREHASAAQSPGSPTRISRMQE). The interval 2–32 (ATSTPSRAREHASAAQSPGSPTRISRMQEKE) is head. Residues 15 to 26 (AAQSPGSPTRIS) are compositionally biased toward polar residues. S21 bears the Phosphoserine mark. The IF rod domain occupies 30 to 386 (EKEDLRHLND…KMLEGEEQRL (357 aa)). The interval 33-67 (DLRHLNDRLAAYIERVRSLEADKSLLKIQLEEREE) is coil 1A. The segment at 68 to 79 (VSSREVTNLRQL) is linker 1. The segment at 80-215 (YETELADARK…QKNIHTQEVK (136 aa)) is coil 1B. The linker 2 stretch occupies residues 216 to 242 (EIKKRHDTRIVEIDSGRRVEFESKLAE). Residues 243–384 (ALQELRRDHE…YRKMLEGEEQ (142 aa)) are coil 2. The tract at residues 383-431 (EQRLKLSPSPSQRSTVSRASTSQTSRLLRGKKRKLDETGRSVTKRSYKV) is disordered. Residues 385-580 (RLKLSPSPSQ…QSHQSVDPSC (196 aa)) are tail. The segment covering 390 to 408 (PSPSQRSTVSRASTSQTSR) has biased composition (polar residues). S391 is modified (phosphoserine). Residues 429-546 (YKVVQQASST…EECAERTLYR (118 aa)) enclose the LTD domain. Position 580 is a cysteine methyl ester (C580). C580 carries S-farnesyl cysteine lipidation. Positions 581–583 (SIM) are cleaved as a propeptide — removed in mature form.

Belongs to the intermediate filament family. In terms of processing, phosphorylation plays a key role in lamin organization, subcellular localization and nuclear envelope disintegration. Phosphorylation by CDK1 at Ser-21 at the onset of mitosis drives lamin disassembly and nuclear envelope breakdown.

It localises to the nucleus lamina. The protein resides in the nucleus envelope. It is found in the nucleus. The protein localises to the nucleoplasm. Its subcellular location is the nucleus matrix. Its function is as follows. Lamins are intermediate filament proteins that assemble into a filamentous meshwork, and which constitute the major components of the nuclear lamina, a fibrous layer on the nucleoplasmic side of the inner nuclear membrane. Lamins provide a framework for the nuclear envelope, bridging the nuclear envelope and chromatin, thereby playing an important role in nuclear assembly, chromatin organization, nuclear membrane and telomere dynamics. The structural integrity of the lamina is strictly controlled by the cell cycle, as seen by the disintegration and formation of the nuclear envelope in prophase and telophase, respectively. In Xenopus laevis (African clawed frog), this protein is Lamin-B3 (lmnb3.L).